The chain runs to 438 residues: Xylose isomerase (438 aa).

Active-site residues include H102 and D105. Mg(2+) is bound by residues E233, E269, H272, D297, D308, D310, and D340.

Belongs to the xylose isomerase family. As to quaternary structure, homotetramer. Requires Mg(2+) as cofactor.

The protein localises to the cytoplasm. The enzyme catalyses alpha-D-xylose = alpha-D-xylulofuranose. This chain is Xylose isomerase, found in Solibacter usitatus (strain Ellin6076).